A 246-amino-acid polypeptide reads, in one-letter code: Outer membrane protein assembly factor BamD (246 aa).

An N-terminal signal peptide occupies residues 1–22 (MKKKNSIIFVFMILFFNSTVQS).

It belongs to the BamD family. Part of the Bam complex.

Its subcellular location is the cell outer membrane. Part of the outer membrane protein assembly complex, which is involved in assembly and insertion of beta-barrel proteins into the outer membrane. This chain is Outer membrane protein assembly factor BamD, found in Buchnera aphidicola subsp. Acyrthosiphon pisum (strain APS) (Acyrthosiphon pisum symbiotic bacterium).